We begin with the raw amino-acid sequence, 369 residues long: uncharacterized protein (369 aa).

It belongs to the myo-inositol 1-phosphate synthase family.

This is an uncharacterized protein from Mycobacterium leprae (strain TN).